The chain runs to 561 residues: Probable xyloglucan galactosyltransferase GT20 (561 aa).

Over 1-31 (MVSKRKSRTSKTIEDSCIHLCSVFFRFLYYT) the chain is Cytoplasmic. The helical; Signal-anchor for type II membrane protein transmembrane segment at 32-52 (LPALFLFFFLLYLCLSFTTGI) threads the bilayer. The Lumenal segment spans residues 53–561 (SYNNFHMCIF…LLKKINRSVV (509 aa)). Asparagine 87, asparagine 253, asparagine 277, asparagine 418, asparagine 421, and asparagine 557 each carry an N-linked (GlcNAc...) asparagine glycan.

It belongs to the glycosyltransferase 47 family. In terms of tissue distribution, expressed in hydathodes.

The protein localises to the golgi apparatus membrane. Functions in xyloglucan synthesis by adding side chains to the xylosylated glucan backbone. Involved in the galactosylation of hemicellulose xyloglucan. The polypeptide is Probable xyloglucan galactosyltransferase GT20 (Arabidopsis thaliana (Mouse-ear cress)).